The primary structure comprises 151 residues: Deoxyuridine 5'-triphosphate nucleotidohydrolase (151 aa).

Residues 70–72 (RSG), Asn83, 87–89 (LID), and Met97 contribute to the substrate site.

It belongs to the dUTPase family. Requires Mg(2+) as cofactor.

The catalysed reaction is dUTP + H2O = dUMP + diphosphate + H(+). Its pathway is pyrimidine metabolism; dUMP biosynthesis; dUMP from dCTP (dUTP route): step 2/2. Its function is as follows. This enzyme is involved in nucleotide metabolism: it produces dUMP, the immediate precursor of thymidine nucleotides and it decreases the intracellular concentration of dUTP so that uracil cannot be incorporated into DNA. In Psychromonas ingrahamii (strain DSM 17664 / CCUG 51855 / 37), this protein is Deoxyuridine 5'-triphosphate nucleotidohydrolase.